We begin with the raw amino-acid sequence, 307 residues long: Protease HtpX homolog 1 (307 aa).

The next 2 membrane-spanning stretches (helical) occupy residues 7-27 (LKTLMFLSGTLTIIAEGIITY) and 38-60 (IFTAIFLVILWLIQWLIAPYLVG). H133 contributes to the Zn(2+) binding site. The active site involves E134. H137 contributes to the Zn(2+) binding site. A run of 2 helical transmembrane segments spans residues 145 to 165 (IGMALGLIPTIIGYVGNFLLF) and 180 to 200 (LILGLAMLAIGGVLFVLTFLL). Residue E212 coordinates Zn(2+).

The protein belongs to the peptidase M48B family. The cofactor is Zn(2+).

The protein resides in the cell membrane. The chain is Protease HtpX homolog 1 from Sulfolobus acidocaldarius (strain ATCC 33909 / DSM 639 / JCM 8929 / NBRC 15157 / NCIMB 11770).